The following is a 431-amino-acid chain: Trigger factor (431 aa).

The PPIase FKBP-type domain maps to 160 to 245; sequence DDRVTIDFVG…VKKVEVMVLP (86 aa).

This sequence belongs to the FKBP-type PPIase family. Tig subfamily.

It localises to the cytoplasm. It catalyses the reaction [protein]-peptidylproline (omega=180) = [protein]-peptidylproline (omega=0). Functionally, involved in protein export. Acts as a chaperone by maintaining the newly synthesized protein in an open conformation. Functions as a peptidyl-prolyl cis-trans isomerase. The protein is Trigger factor of Mannheimia succiniciproducens (strain KCTC 0769BP / MBEL55E).